Here is a 243-residue protein sequence, read N- to C-terminus: Small ribosomal subunit protein uS5 (243 aa).

Composition is skewed to basic and acidic residues over residues 1 to 21 (MPIDKKQEKNFTNKIQEEGQK) and 34 to 46 (LEEKLNKNPDHKG). The segment at 1–85 (MPIDKKQEKN…NFKKNANKKP (85 aa)) is disordered. Residues 89-152 (FEEKIVNIAR…KDAQNNLIRV (64 aa)) form the S5 DRBM domain.

The protein belongs to the universal ribosomal protein uS5 family. In terms of assembly, part of the 30S ribosomal subunit. Contacts proteins S4 and S8.

In terms of biological role, with S4 and S12 plays an important role in translational accuracy. Functionally, located at the back of the 30S subunit body where it stabilizes the conformation of the head with respect to the body. The polypeptide is Small ribosomal subunit protein uS5 (Mycoplasma mobile (strain ATCC 43663 / 163K / NCTC 11711) (Mesomycoplasma mobile)).